A 209-amino-acid chain; its full sequence is Kynurenine formamidase (209 aa).

Substrate is bound at residue tryptophan 18. 3 residues coordinate Zn(2+): histidine 48, histidine 52, and aspartate 54. Histidine 58 functions as the Proton donor/acceptor in the catalytic mechanism. Zn(2+) contacts are provided by histidine 160 and glutamate 172.

Belongs to the Cyclase 1 superfamily. KynB family. Homodimer. Requires Zn(2+) as cofactor.

It carries out the reaction N-formyl-L-kynurenine + H2O = L-kynurenine + formate + H(+). The protein operates within amino-acid degradation; L-tryptophan degradation via kynurenine pathway; L-kynurenine from L-tryptophan: step 2/2. Catalyzes the hydrolysis of N-formyl-L-kynurenine to L-kynurenine, the second step in the kynurenine pathway of tryptophan degradation. In Paraburkholderia phymatum (strain DSM 17167 / CIP 108236 / LMG 21445 / STM815) (Burkholderia phymatum), this protein is Kynurenine formamidase.